A 459-amino-acid polypeptide reads, in one-letter code: Cyclin-dependent kinase F-4 (459 aa).

A Protein kinase domain is found at 4-283 (FKMIKEVGDG…AAEVLQHTFF (280 aa)). ATP-binding positions include 10–18 (VGDGTFGSV) and lysine 33. The Proton acceptor role is filled by aspartate 125. Serine 151 is modified (phosphoserine). Residue threonine 156 is modified to Phosphothreonine. Positions 310–397 (KGVSEHGMPR…RHSRSLPETG (88 aa)) are disordered. Polar residues-rich tracts occupy residues 322–346 (STGT…SKTG) and 366–375 (ESNNKLTTNR).

Belongs to the protein kinase superfamily. CMGC Ser/Thr protein kinase family. CDC2/CDKX subfamily.

The enzyme catalyses L-seryl-[protein] + ATP = O-phospho-L-seryl-[protein] + ADP + H(+). The catalysed reaction is L-threonyl-[protein] + ATP = O-phospho-L-threonyl-[protein] + ADP + H(+). It carries out the reaction [DNA-directed RNA polymerase] + ATP = phospho-[DNA-directed RNA polymerase] + ADP + H(+). The polypeptide is Cyclin-dependent kinase F-4 (CDKF-4) (Oryza sativa subsp. japonica (Rice)).